The following is a 204-amino-acid chain: E2 ubiquitin-conjugating enzyme PEX4 (204 aa).

Residues 2–196 (SAEKRLLQEY…IEYYVGRYSI (195 aa)) enclose the UBC core domain. C133 acts as the Glycyl thioester intermediate in catalysis.

The protein belongs to the ubiquitin-conjugating enzyme family.

It is found in the peroxisome membrane. It catalyses the reaction S-ubiquitinyl-[E1 ubiquitin-activating enzyme]-L-cysteine + [E2 ubiquitin-conjugating enzyme]-L-cysteine = [E1 ubiquitin-activating enzyme]-L-cysteine + S-ubiquitinyl-[E2 ubiquitin-conjugating enzyme]-L-cysteine.. Its pathway is protein modification; protein ubiquitination. In terms of biological role, E2 ubiquitin-conjugating enzyme involved in peroxisome biosynthesis. Acts late in peroxisomal matrix protein import, after matrix protein translocation. Required for both monoubiquitination and polyubiquitination of coreceptor PEX20. polyubiquitination of PEX20 at conserved lysine 'Lys-19' near the N-terminus leads to its and proteasomal degradation, whereas a monoubiquitination at the conserved cysteine 'Cys-8' is essential for its recycling. The polypeptide is E2 ubiquitin-conjugating enzyme PEX4 (Komagataella phaffii (strain GS115 / ATCC 20864) (Yeast)).